The following is a 347-amino-acid chain: Twinfilin-2 (347 aa).

ADF-H domains follow at residues 3–137 (LVLV…RHIT) and 175–311 (GLAF…DEVH). The disordered stretch occupies residues 314 to 347 (QHAHKQAFAKPRGPAGKRGNKRLIKGGGENGGNS). Gly residues predominate over residues 338 to 347 (KGGGENGGNS).

Belongs to the actin-binding proteins ADF family. Twinfilin subfamily. As to quaternary structure, interacts with G-actin; ADP-actin form and capping protein (CP).

Its subcellular location is the cytoplasm. The protein resides in the cytoskeleton. It localises to the perinuclear region. Actin-binding protein involved in motile and morphological processes. Inhibits actin polymerization, likely by sequestering G-actin. This chain is Twinfilin-2 (twf2), found in Danio rerio (Zebrafish).